The chain runs to 320 residues: Myeloid-associated differentiation marker (320 aa).

2 MARVEL domains span residues 25–157 and 162–317; these read ALTQ…ARPG and YMAT…RLVF. The next 8 helical transmembrane spans lie at 35–55, 61–81, 95–115, 131–151, 165–185, 197–217, 233–253, and 292–312; these read LLQL…GAWT, WAMF…IVEL, FPIT…IIYP, AIAA…EVAW, TVPG…FAFI, LEWC…TILL, FLSG…VLWP, and LAVS…LVYS.

This sequence belongs to the MAL family.

It localises to the membrane. The chain is Myeloid-associated differentiation marker (Myadm) from Mus musculus (Mouse).